A 285-amino-acid polypeptide reads, in one-letter code: Type II secretion system protein C (285 aa).

Residues 1 to 27 (MARLQAFKDPSFHSLVATFRSLPLIRR) lie on the Cytoplasmic side of the membrane. Residues 28–48 (FVLGLILLLICQQLAVLTWRF) form a helical membrane-spanning segment. Over 49-285 (LLPEDSRIVG…DIYLALDGDH (237 aa)) the chain is Periplasmic.

This sequence belongs to the GSP C family.

The protein resides in the cell inner membrane. In terms of biological role, involved in a type II secretion system (T2SS, formerly general secretion pathway, GSP) for the export of proteins. Required for the translocation of the multiple pectic enzymes. In Pectobacterium carotovorum subsp. carotovorum (Erwinia carotovora subsp. carotovora), this protein is Type II secretion system protein C (outC).